We begin with the raw amino-acid sequence, 383 residues long: Dihydroorotase (383 aa).

Zn(2+)-binding residues include histidine 47 and histidine 49. Residues 49–51 (HFR) and asparagine 81 contribute to the substrate site. Zn(2+)-binding residues include lysine 128, histidine 159, histidine 198, and aspartate 264. Lysine 128 carries the N6-carboxylysine modification. The active site involves aspartate 264. Residues histidine 268 and 280-281 (PG) contribute to the substrate site.

This sequence belongs to the metallo-dependent hydrolases superfamily. DHOase family. Class I DHOase subfamily. Requires Zn(2+) as cofactor.

It carries out the reaction (S)-dihydroorotate + H2O = N-carbamoyl-L-aspartate + H(+). Its pathway is pyrimidine metabolism; UMP biosynthesis via de novo pathway; (S)-dihydroorotate from bicarbonate: step 3/3. Catalyzes the reversible cyclization of carbamoyl aspartate to dihydroorotate. This is Dihydroorotase from Pyrobaculum aerophilum (strain ATCC 51768 / DSM 7523 / JCM 9630 / CIP 104966 / NBRC 100827 / IM2).